We begin with the raw amino-acid sequence, 525 residues long: Nucleolar and spindle-associated protein 1-C (525 aa).

Disordered regions lie at residues 43-203 (FYPE…KKLH), 250-293 (TPVS…FSAA), 373-398 (TPES…EKAK), and 452-525 (LSRP…VPVQ). Positions 58–69 (SSLTDTDELNSS) are enriched in polar residues. Over residues 82–92 (THRRGRGRKPL) the composition is skewed to basic residues. The span at 93–102 (KNHDTPKDEF) shows a compositional bias: basic and acidic residues. Residues 113–127 (SLASETDNTQHQNCL) are compositionally biased toward polar residues. Residues 160–169 (TTEKRQKKAS) are compositionally biased toward basic and acidic residues. A compositionally biased stretch (polar residues) spans 270 to 285 (PPTTGASPSRTPTNQR). Polar residues predominate over residues 476–494 (CGSNNNVSVLKNNFKQPHL). A compositionally biased stretch (basic and acidic residues) spans 495-514 (QTREDRRKQHEQDRKGKRDQ).

This sequence belongs to the NUSAP family. In terms of assembly, interacts with DNA, microtubules, ipo7, kpna2 and kpnb1. Microtubule stabilization is inhibited by ipo7 and kpna2, while microtubule bundling is inhibited by kpnb1. Active GTP-bound ran causes dissociation of ipo7 and kpnb1.

It is found in the cytoplasm. The protein localises to the nucleus. It localises to the cytoskeleton. Its subcellular location is the spindle. Functionally, microtubule-associated protein with the capacity to bundle and stabilize microtubules. May associate with chromosomes and promote the organization of meiotic or mitotic spindle microtubules around them. This Xenopus laevis (African clawed frog) protein is Nucleolar and spindle-associated protein 1-C (nusap1-c).